Here is a 238-residue protein sequence, read N- to C-terminus: Ribosomal RNA small subunit methyltransferase G (238 aa).

Residues Gly-77, Phe-82, 128–129 (AE), and Arg-147 contribute to the S-adenosyl-L-methionine site. The interval 216–238 (RKERSTPKKYPRKPGTPNKQPLS) is disordered.

The protein belongs to the methyltransferase superfamily. RNA methyltransferase RsmG family.

The protein resides in the cytoplasm. Specifically methylates the N7 position of guanine in position 535 of 16S rRNA. The chain is Ribosomal RNA small subunit methyltransferase G from Halalkalibacterium halodurans (strain ATCC BAA-125 / DSM 18197 / FERM 7344 / JCM 9153 / C-125) (Bacillus halodurans).